We begin with the raw amino-acid sequence, 95 residues long: Progonadoliberin-1 (95 aa).

The first 22 residues, 1 to 22, serve as a signal peptide directing secretion; that stretch reads MAPQTFALWLLLVGTLLGQGCC. At Gln23 the chain carries Pyrrolidone carboxylic acid. Residue Gly32 is modified to Glycine amide.

It belongs to the GnRH family.

The protein localises to the secreted. Stimulates the secretion of gonadotropins. This Morone saxatilis (Striped bass) protein is Progonadoliberin-1 (gnrh1).